The following is a 402-amino-acid chain: Putative F-box protein At3g23960 (402 aa).

Positions 1–23 (MRSRQLHNVSEDRETLSRRNKRS) are disordered. The F-box domain maps to 26–73 (SLNGHIPIDLLIEIFLKLPVKSIATCRSVSKFWTYVLGRQDFTELFLT).

The chain is Putative F-box protein At3g23960 from Arabidopsis thaliana (Mouse-ear cress).